The primary structure comprises 370 residues: F-box protein At1g66490 (370 aa).

An F-box domain is found at 1-46; it reads MRTISDLPVALVEEILSRVPLTSLSAVRSTCKTWNALSKTQIFGKT.

The polypeptide is F-box protein At1g66490 (Arabidopsis thaliana (Mouse-ear cress)).